Reading from the N-terminus, the 160-residue chain is Arginine repressor (160 aa).

This sequence belongs to the ArgR family.

It is found in the cytoplasm. Its pathway is amino-acid biosynthesis; L-arginine biosynthesis [regulation]. Its function is as follows. Regulates arginine biosynthesis genes. The chain is Arginine repressor from Anaeromyxobacter sp. (strain K).